Consider the following 319-residue polypeptide: Ankyrin repeat domain-containing protein 1 (319 aa).

Positions 61-89 (KSEKQREAELKKKKLEQRSKLENLEDLEI) form a coiled coil. ANK repeat units follow at residues 152–181 (YKRT…QIEF), 185–214 (LEST…KISA), 218–247 (LLST…DLNA), 251–280 (EGDT…DLNI), and 284–315 (AGKT…KTSR).

As to quaternary structure, interacts with YBX1. Interacts with TTN/titin. In terms of tissue distribution, mainly expressed in activated vascular endothelial cells. To a lower extent, also expressed in hepatoma cells.

Its subcellular location is the nucleus. Functionally, may play an important role in endothelial cell activation. May act as a nuclear transcription factor that negatively regulates the expression of cardiac genes. Induction seems to be correlated with apoptotic cell death in hepatoma cells. The protein is Ankyrin repeat domain-containing protein 1 (ANKRD1) of Homo sapiens (Human).